We begin with the raw amino-acid sequence, 66 residues long: Large ribosomal subunit protein uL29 (66 aa).

This sequence belongs to the universal ribosomal protein uL29 family.

The polypeptide is Large ribosomal subunit protein uL29 (Borrelia garinii subsp. bavariensis (strain ATCC BAA-2496 / DSM 23469 / PBi) (Borreliella bavariensis)).